A 141-amino-acid chain; its full sequence is Hemoglobin subunit alpha (141 aa).

In terms of domain architecture, Globin spans 1 to 141; the sequence is VLSPADKSNV…VSTVLTSKYR (141 aa). Ser3 is subject to Phosphoserine. 2 positions are modified to N6-succinyllysine: Lys7 and Lys11. Lys16 carries the post-translational modification N6-acetyllysine; alternate. Lys16 is subject to N6-succinyllysine; alternate. Tyr24 is subject to Phosphotyrosine. At Ser35 the chain carries Phosphoserine. The residue at position 40 (Lys40) is an N6-succinyllysine. Phosphoserine is present on Ser49. His58 contacts O2. A heme b-binding site is contributed by His87. A Phosphoserine modification is found at Ser102. Thr108 is subject to Phosphothreonine. Phosphoserine occurs at positions 124 and 131. 2 positions are modified to phosphothreonine: Thr134 and Thr137. Residue Ser138 is modified to Phosphoserine.

This sequence belongs to the globin family. In terms of assembly, heterotetramer of two alpha chains and two beta chains. Red blood cells.

In terms of biological role, involved in oxygen transport from the lung to the various peripheral tissues. Its function is as follows. Hemopressin acts as an antagonist peptide of the cannabinoid receptor CNR1. Hemopressin-binding efficiently blocks cannabinoid receptor CNR1 and subsequent signaling. The protein is Hemoglobin subunit alpha (HBA) of Leontocebus fuscicollis (Brown-mantled tamarin).